We begin with the raw amino-acid sequence, 139 residues long: Flagellar basal body rod protein FlgB (139 aa).

It belongs to the flagella basal body rod proteins family. The basal body constitutes a major portion of the flagellar organelle and consists of a number of rings mounted on a central rod. In Gram-negative bacteria, at least four rings, L, P, S and M are present, whereas Gram-positive bacteria lack the L and P rings. The rod consists of about 26 subunits of FlgG in the distal portion, and FlgB, FlgC and FlgF build up the proximal portion of the rod with about 6 subunits each. Rod assembly occurs by export via the flagellum-specific pathway of its constituent proteins and by their incorporation into the rod structure in the probable order of FlgB, FlgC, FlgF and FlgG. Another protein, FliE, also assembles onto the stable rod structure.

Its subcellular location is the bacterial flagellum basal body. Functionally, structural component of flagellum, the bacterial motility apparatus. Part of the rod structure of flagellar basal body. The chain is Flagellar basal body rod protein FlgB from Proteus mirabilis.